The following is a 267-amino-acid chain: Pyrroline-5-carboxylate reductase (267 aa).

Belongs to the pyrroline-5-carboxylate reductase family.

It localises to the cytoplasm. It catalyses the reaction L-proline + NADP(+) = (S)-1-pyrroline-5-carboxylate + NADPH + 2 H(+). It carries out the reaction L-proline + NAD(+) = (S)-1-pyrroline-5-carboxylate + NADH + 2 H(+). It functions in the pathway amino-acid biosynthesis; L-proline biosynthesis; L-proline from L-glutamate 5-semialdehyde: step 1/1. Its function is as follows. Catalyzes the reduction of 1-pyrroline-5-carboxylate (PCA) to L-proline. The protein is Pyrroline-5-carboxylate reductase of Synechocystis sp. (strain ATCC 27184 / PCC 6803 / Kazusa).